The following is a 333-amino-acid chain: MEKFIKINWTENKTKRINDFSTSFIVQPLEKGLATTLGTAIRRVLLSSISSVAPFAVKIKGVEHEFMAINKVTEDVPQILLRLRDIKIAYNPEIFEDGKIYKLSLKSNKEAGDIYAKDFILPIGAEIVNPGLLIATTAAANVLEIDVFVRAGRGYVDFEENKKYIDEIKTNLTSSISNGQYIAVDSNFSPIEKVSFSSSELNTSSVIVQEKLEMEIVTKGTIDAKNAIAQAAKILVAHLNIIGDVNSLNIKDIFEEGNTEKEHSKTQNILIQSLDLSIRSFNALKRANYTTVQQLEALSLDDLKNIKNLGEKSINEIVEKLEKYNVFLDKGEE.

Residues 1-246 (MEKFIKINWT…AHLNIIGDVN (246 aa)) form an alpha N-terminal domain (alpha-NTD) region. An alpha C-terminal domain (alpha-CTD) region spans residues 263-333 (HSKTQNILIQ…YNVFLDKGEE (71 aa)).

It belongs to the RNA polymerase alpha chain family. In terms of assembly, homodimer. The RNAP catalytic core consists of 2 alpha, 1 beta, 1 beta' and 1 omega subunit. When a sigma factor is associated with the core the holoenzyme is formed, which can initiate transcription.

The enzyme catalyses RNA(n) + a ribonucleoside 5'-triphosphate = RNA(n+1) + diphosphate. In terms of biological role, DNA-dependent RNA polymerase catalyzes the transcription of DNA into RNA using the four ribonucleoside triphosphates as substrates. The chain is DNA-directed RNA polymerase subunit alpha from Mycoplasma mobile (strain ATCC 43663 / 163K / NCTC 11711) (Mesomycoplasma mobile).